A 516-amino-acid polypeptide reads, in one-letter code: GMP synthase [glutamine-hydrolyzing] (516 aa).

A Glutamine amidotransferase type-1 domain is found at 5–199 (PIVILDFGSQ…ARKICGITSK (195 aa)). The active-site Nucleophile is the Cys82. Residues His173 and Glu175 contribute to the active site. In terms of domain architecture, GMPS ATP-PPase spans 200 to 391 (WDMGHFAKEQ…LGLPREMVYR (192 aa)). 227–233 (SGGVDSS) serves as a coordination point for ATP.

Homodimer.

The catalysed reaction is XMP + L-glutamine + ATP + H2O = GMP + L-glutamate + AMP + diphosphate + 2 H(+). It functions in the pathway purine metabolism; GMP biosynthesis; GMP from XMP (L-Gln route): step 1/1. Catalyzes the synthesis of GMP from XMP. In Nitratiruptor sp. (strain SB155-2), this protein is GMP synthase [glutamine-hydrolyzing].